Here is a 207-residue protein sequence, read N- to C-terminus: Ribosomal RNA large subunit methyltransferase E (207 aa).

Residues Gly60, Trp62, Asp80, Asp96, and Asp121 each coordinate S-adenosyl-L-methionine. Lys161 functions as the Proton acceptor in the catalytic mechanism.

Belongs to the class I-like SAM-binding methyltransferase superfamily. RNA methyltransferase RlmE family.

The protein localises to the cytoplasm. It carries out the reaction uridine(2552) in 23S rRNA + S-adenosyl-L-methionine = 2'-O-methyluridine(2552) in 23S rRNA + S-adenosyl-L-homocysteine + H(+). Its function is as follows. Specifically methylates the uridine in position 2552 of 23S rRNA at the 2'-O position of the ribose in the fully assembled 50S ribosomal subunit. The protein is Ribosomal RNA large subunit methyltransferase E of Methylobacillus flagellatus (strain ATCC 51484 / DSM 6875 / VKM B-1610 / KT).